Here is a 101-residue protein sequence, read N- to C-terminus: Guanyl-specific ribonuclease St (101 aa).

Residues Cys4 and Cys54 are joined by a disulfide bond. The Proton acceptor role is filled by Glu61. His91 serves as the catalytic Proton donor.

This sequence belongs to the ribonuclease N1/T1 family.

The catalysed reaction is [RNA] containing guanosine + H2O = an [RNA fragment]-3'-guanosine-3'-phosphate + a 5'-hydroxy-ribonucleotide-3'-[RNA fragment].. This is Guanyl-specific ribonuclease St from Saccharopolyspora erythraea (Streptomyces erythraeus).